A 319-amino-acid chain; its full sequence is D-alanine--D-alanine ligase (319 aa).

An ATP-grasp domain is found at 120–315; the sequence is KRVLAQAGVP…YPELLRRLVE (196 aa). Residue 147 to 198 coordinates ATP; sequence DPPFFVKPANTGSSVGISRVERFQDLEAALALAFRYDEKAVVEKALSPVREL. Mg(2+)-binding residues include D270, E282, and N284.

It belongs to the D-alanine--D-alanine ligase family. Mg(2+) is required as a cofactor. Mn(2+) serves as cofactor.

It localises to the cytoplasm. It catalyses the reaction 2 D-alanine + ATP = D-alanyl-D-alanine + ADP + phosphate + H(+). It functions in the pathway cell wall biogenesis; peptidoglycan biosynthesis. Its function is as follows. Cell wall formation. This Thermus thermophilus (strain ATCC BAA-163 / DSM 7039 / HB27) protein is D-alanine--D-alanine ligase.